The primary structure comprises 261 residues: Small ribosomal subunit protein uS2 (261 aa).

Residues 223-261 are disordered; that stretch reads EGKQGQDDSEDVEKEMADKAAAEDDEEESIEVVVEKSED.

It belongs to the universal ribosomal protein uS2 family.

In Lactobacillus johnsonii (strain CNCM I-12250 / La1 / NCC 533), this protein is Small ribosomal subunit protein uS2.